The following is a 345-amino-acid chain: Holliday junction branch migration complex subunit RuvB (345 aa).

Residues 4 to 185 are large ATPase domain (RuvB-L); sequence TDRLIAPSTQ…FGIVSRLEFY (182 aa). ATP-binding positions include leucine 24, arginine 25, glycine 66, lysine 69, threonine 70, threonine 71, 132–134, arginine 175, tyrosine 185, and arginine 222; that span reads EDY. Threonine 70 is a binding site for Mg(2+). The tract at residues 186-256 is small ATPAse domain (RuvB-S); it reads TADELARIVH…IADAALKMLD (71 aa). Residues 259–345 are head domain (RuvB-H); it reads KLGFDVMDRK…KIGTGELWQQ (87 aa). Residues arginine 295, arginine 314, and arginine 319 each contribute to the DNA site.

It belongs to the RuvB family. In terms of assembly, homohexamer. Forms an RuvA(8)-RuvB(12)-Holliday junction (HJ) complex. HJ DNA is sandwiched between 2 RuvA tetramers; dsDNA enters through RuvA and exits via RuvB. An RuvB hexamer assembles on each DNA strand where it exits the tetramer. Each RuvB hexamer is contacted by two RuvA subunits (via domain III) on 2 adjacent RuvB subunits; this complex drives branch migration. In the full resolvosome a probable DNA-RuvA(4)-RuvB(12)-RuvC(2) complex forms which resolves the HJ.

The protein localises to the cytoplasm. It carries out the reaction ATP + H2O = ADP + phosphate + H(+). In terms of biological role, the RuvA-RuvB-RuvC complex processes Holliday junction (HJ) DNA during genetic recombination and DNA repair, while the RuvA-RuvB complex plays an important role in the rescue of blocked DNA replication forks via replication fork reversal (RFR). RuvA specifically binds to HJ cruciform DNA, conferring on it an open structure. The RuvB hexamer acts as an ATP-dependent pump, pulling dsDNA into and through the RuvAB complex. RuvB forms 2 homohexamers on either side of HJ DNA bound by 1 or 2 RuvA tetramers; 4 subunits per hexamer contact DNA at a time. Coordinated motions by a converter formed by DNA-disengaged RuvB subunits stimulates ATP hydrolysis and nucleotide exchange. Immobilization of the converter enables RuvB to convert the ATP-contained energy into a lever motion, pulling 2 nucleotides of DNA out of the RuvA tetramer per ATP hydrolyzed, thus driving DNA branch migration. The RuvB motors rotate together with the DNA substrate, which together with the progressing nucleotide cycle form the mechanistic basis for DNA recombination by continuous HJ branch migration. Branch migration allows RuvC to scan DNA until it finds its consensus sequence, where it cleaves and resolves cruciform DNA. In Methylobacillus flagellatus (strain ATCC 51484 / DSM 6875 / VKM B-1610 / KT), this protein is Holliday junction branch migration complex subunit RuvB.